Here is a 391-residue protein sequence, read N- to C-terminus: Putative alpha-ketoglutarate-dependent sulfonate dioxygenase (391 aa).

Residues His-204 and Asp-206 each contribute to the Fe cation site. The 2-oxoglutarate site is built by Thr-231 and Trp-338. His-353 provides a ligand contact to Fe cation. Arg-364 and Arg-368 together coordinate 2-oxoglutarate.

It belongs to the TfdA dioxygenase family. Fe(2+) is required as a cofactor.

The protein operates within organosulfur degradation; alkanesulfonate degradation. Functionally, acts as an alpha-ketoglutarate-dependent dioxygenase active on sulfonates. The sequence is that of Putative alpha-ketoglutarate-dependent sulfonate dioxygenase from Schizosaccharomyces pombe (strain 972 / ATCC 24843) (Fission yeast).